Consider the following 239-residue polypeptide: Protein GrpE (239 aa).

Disordered stretches follow at residues Met-1–Asp-60 and Ser-208–Val-239. Over residues Ser-28–Gln-42 the composition is skewed to polar residues. Basic and acidic residues-rich tracts occupy residues Lys-43–Lys-53 and Ser-216–Val-225. Residues Glu-226–Val-239 show a composition bias toward acidic residues.

This sequence belongs to the GrpE family. In terms of assembly, homodimer.

Its subcellular location is the cytoplasm. Its function is as follows. Participates actively in the response to hyperosmotic and heat shock by preventing the aggregation of stress-denatured proteins, in association with DnaK and GrpE. It is the nucleotide exchange factor for DnaK and may function as a thermosensor. Unfolded proteins bind initially to DnaJ; upon interaction with the DnaJ-bound protein, DnaK hydrolyzes its bound ATP, resulting in the formation of a stable complex. GrpE releases ADP from DnaK; ATP binding to DnaK triggers the release of the substrate protein, thus completing the reaction cycle. Several rounds of ATP-dependent interactions between DnaJ, DnaK and GrpE are required for fully efficient folding. The chain is Protein GrpE from Prochlorococcus marinus (strain MIT 9301).